A 223-amino-acid polypeptide reads, in one-letter code: MIF4G domain-containing protein A (223 aa).

In terms of domain architecture, MIF4G spans 7 to 206 (QEDYKMQAFD…LEMIEYRAAG (200 aa)).

The protein belongs to the MIF4GD family. Interacts with eif4g1, eif4g2 and slbp; probably tethered by SLBP to the 3'-end of mRNAs ending with the histone stem-loop, it also interacts with eif4g1 which is bound to their 5'-end.

The protein resides in the cytoplasm. Its subcellular location is the nucleus. Functions in replication-dependent translation of histone mRNAs which differ from other eukaryotic mRNAs in that they do not end with a poly-A tail but a stem-loop. May participate in circularizing those mRNAs specifically enhancing their translation. The sequence is that of MIF4G domain-containing protein A (mif4gd-a) from Xenopus laevis (African clawed frog).